The primary structure comprises 265 residues: Glutamate racemase (265 aa).

Substrate is bound by residues 9 to 10 and 41 to 42; these read DS and YS. The active-site Proton donor/acceptor is the Cys73. 74–75 is a substrate binding site; the sequence is NT. The Proton donor/acceptor role is filled by Cys184. 185–186 contacts substrate; it reads TH.

This sequence belongs to the aspartate/glutamate racemases family.

The enzyme catalyses L-glutamate = D-glutamate. The protein operates within cell wall biogenesis; peptidoglycan biosynthesis. Functionally, provides the (R)-glutamate required for cell wall biosynthesis. The chain is Glutamate racemase from Haemophilus ducreyi (strain 35000HP / ATCC 700724).